Consider the following 237-residue polypeptide: Sugar fermentation stimulation protein homolog (237 aa).

Belongs to the SfsA family.

This Pseudomonas fluorescens (strain Pf0-1) protein is Sugar fermentation stimulation protein homolog.